We begin with the raw amino-acid sequence, 140 residues long: Putative esterase MT1895 (140 aa).

This sequence belongs to the thioesterase PaaI family.

The polypeptide is Putative esterase MT1895 (Mycobacterium tuberculosis (strain CDC 1551 / Oshkosh)).